Here is a 305-residue protein sequence, read N- to C-terminus: DNA-directed RNA polymerase 35 kDa subunit (305 aa).

Belongs to the poxviridae DNA-directed RNA polymerase 35 kDa subunit family. The DNA-dependent RNA polymerase used for intermediate and late genes expression consists of eight subunits 147 kDa, 133 kDa, 35 kDa, 30 kDa, 22 kDa, 19 kDa, 18 kDa and 7 kDa totalling more than 500 kDa in mass. The same holoenzyme, with the addition of the transcription-specificity factor RAP94, is used for early gene expression.

It localises to the virion. It catalyses the reaction RNA(n) + a ribonucleoside 5'-triphosphate = RNA(n+1) + diphosphate. In terms of biological role, part of the DNA-dependent RNA polymerase which catalyzes the transcription of viral DNA into RNA using the four ribonucleoside triphosphates as substrates. Responsible for the transcription of early, intermediate and late genes. DNA-dependent RNA polymerase associates with the early transcription factor (ETF), itself composed of D6 and A7, thereby allowing the early genes transcription. Late transcription, and probably also intermediate transcription, require newly synthesized RNA polymerase. The sequence is that of DNA-directed RNA polymerase 35 kDa subunit (OPG156) from Cynomys gunnisoni (Gunnison's prairie dog).